The sequence spans 246 residues: Aquaporin SIP1-1 (246 aa).

Transmembrane regions (helical) follow at residues 13–33 (AAVT…TAAV) and 45–65 (YALL…NLLC). The NPA 1 motif lies at 74-76 (NPT). A run of 3 helical transmembrane segments spans residues 95 to 115 (FPLA…AMAI), 139 to 159 (GAAA…WIIV), and 166 to 186 (IVKT…GAAY). The NPA 2 motif lies at 192 to 194 (NPA). A helical transmembrane segment spans residues 214-234 (VYWICPFVGAVLAAWVFRAVF).

The protein belongs to the MIP/aquaporin (TC 1.A.8) family. SIP (TC 1.A.8.10) subfamily. Expressed in roots, leaves and anthers.

The protein localises to the membrane. Its function is as follows. Aquaporins facilitate the transport of water and small neutral solutes across cell membranes. The protein is Aquaporin SIP1-1 (SIP1-1) of Oryza sativa subsp. japonica (Rice).